Reading from the N-terminus, the 799-residue chain is Armadillo repeat-containing protein wrm-1 (799 aa).

Residues Met-1 to Lys-10 are compositionally biased toward basic and acidic residues. Residues Met-1–Pro-60 are disordered. The span at Pro-26–Ala-43 shows a compositional bias: polar residues. The ARM repeat unit spans residues Glu-454–Gly-496.

In terms of assembly, interacts (independently of ARM repeat) with nhr-25. Component of the beta-catenin-lit-1 complex (also called the lit-1/wrm-1 complex or the wrm-1/lit-1 kinase complex) at least composed of lit-1 and wrm-1. Interacts (via N-terminus) with lit-1; the interaction is direct and activates lit-1 kinase activity which leads to the phosphorylation of pop-1. This promotes pop-1 interaction with par-5 and translocation of pop-1 from the nucleus to the cytoplasm.

Its subcellular location is the cytoplasm. The protein resides in the cell cortex. It localises to the nucleus. In terms of biological role, antagonistic role in the Wnt signaling pathway that operates in embryogenesis. When located at the cortex it has been shown to inhibit Wnt signaling during asymmetric cell division but when relocated to the nucleus it shows positive regulation. Has a role in blastomere signaling during endoderm specification. Component of the beta-catenin-lit-1 complex which promotes phosphorylation, down-regulation and subcellular relocation of pop-1. Within the complex, activates lit-1-dependent kinase activity. Can substitute for bar-1 indicating functional redundancy. Appears to have a role in centrosome positioning. Involved in the development of distal tip cells (DTC) by regulating the asymmetric distribution of cye-1 and cki-1 between the daughters of Z1.a and Z4.p cells. The chain is Armadillo repeat-containing protein wrm-1 from Caenorhabditis briggsae.